We begin with the raw amino-acid sequence, 643 residues long: Asparagine synthetase domain-containing protein 1 (643 aa).

The active-site For GATase activity is the C2. One can recognise a Glutamine amidotransferase type-2 domain in the interval 2 to 184 (CGICCSVNFS…ASGLFRIDLK (183 aa)). Residues 285–601 (QFIDVLSVAV…GLTASALLPK (317 aa)) enclose the Asparagine synthetase domain.

This chain is Asparagine synthetase domain-containing protein 1 (ASNSD1), found in Homo sapiens (Human).